The chain runs to 1216 residues: ATP-dependent helicase/nuclease subunit A (1216 aa).

In terms of domain architecture, UvrD-like helicase ATP-binding spans 26–488 (QKKTAEQIEA…ILLKENFRSS (463 aa)). Position 47 to 54 (47 to 54 (ASAGSGKT)) interacts with ATP. In terms of domain architecture, UvrD-like helicase C-terminal spans 515–802 (KHQLVFANTK…ELMTIHKSKG (288 aa)).

The protein belongs to the helicase family. AddA subfamily. Heterodimer of AddA and AddB/RexB. It depends on Mg(2+) as a cofactor.

It carries out the reaction Couples ATP hydrolysis with the unwinding of duplex DNA by translocating in the 3'-5' direction.. The catalysed reaction is ATP + H2O = ADP + phosphate + H(+). In terms of biological role, the heterodimer acts as both an ATP-dependent DNA helicase and an ATP-dependent, dual-direction single-stranded exonuclease. Recognizes the chi site generating a DNA molecule suitable for the initiation of homologous recombination. The AddA nuclease domain is required for chi fragment generation; this subunit has the helicase and 3' -&gt; 5' nuclease activities. The protein is ATP-dependent helicase/nuclease subunit A of Streptococcus pneumoniae (strain CGSP14).